The chain runs to 302 residues: Trans-4-hydroxy-L-proline dehydratase activating enzyme (302 aa).

One can recognise a Radical SAM core domain in the interval 14-297 (HDGPGIRSTV…KRLFEASNFN (284 aa)). Residues Cys-28, Cys-32, Cys-35, Cys-54, Cys-57, Cys-60, and Cys-93 each contribute to the [4Fe-4S] cluster site. 34 to 36 (WCH) provides a ligand contact to S-adenosyl-L-methionine. 4Fe-4S ferredoxin-type domains are found at residues 45–74 (KQVL…KGET) and 75–103 (KICL…IVGQ). S-adenosyl-L-methionine is bound by residues Gly-133, 183–185 (DIK), and His-257.

This sequence belongs to the organic radical-activating enzymes family. [4Fe-4S] cluster serves as cofactor.

The catalysed reaction is glycyl-[protein] + reduced [flavodoxin] + S-adenosyl-L-methionine = glycin-2-yl radical-[protein] + semiquinone [flavodoxin] + 5'-deoxyadenosine + L-methionine + H(+). In terms of biological role, catalyzes activation of the trans-4-hydroxy-L-proline dehydratase under anaerobic conditions by generation of an organic free radical on a glycine residue, via a homolytic cleavage of S-adenosyl-L-methionine (SAM). Is involved in the anaerobic degradation of 4-hydroxyproline. The sequence is that of Trans-4-hydroxy-L-proline dehydratase activating enzyme from Clostridioides difficile (Peptoclostridium difficile).